The chain runs to 66 residues: Sodium/potassium-transporting ATPase subunit gamma (66 aa).

Residues 29–46 (GGLIFAGLAFVVGLLILL) form a helical membrane-spanning segment.

The protein belongs to the FXYD family. Regulatory subunit of the sodium/potassium-transporting ATPase which is composed of a catalytic alpha subunit, an auxiliary non-catalytic beta subunit and an additional regulatory subunit. Highest levels expressed in the kidney and spleen. Restricted to the basolateral membrane in renal epithelial cells and varies in its level of expression along the nephron.

The protein localises to the membrane. Functionally, may be involved in forming the receptor site for cardiac glycoside binding or may modulate the transport function of the sodium ATPase. The polypeptide is Sodium/potassium-transporting ATPase subunit gamma (Fxyd2) (Rattus norvegicus (Rat)).